Reading from the N-terminus, the 552-residue chain is Cation transporter HKT1;1 (552 aa).

The Cytoplasmic portion of the chain corresponds to 1-70 (MHPPSLVLDT…QSYSFLVCKS (70 aa)). The next 2 membrane-spanning stretches (helical) occupy residues 71–91 (NPLV…FLAL) and 133–153 (LWVL…MLGL). Topologically, residues 154–221 (YFNNANANRN…TYNPCAVLVR (68 aa)) are cytoplasmic. The next 2 helical transmembrane spans lie at 222–242 (IVTG…IIYF) and 291–311 (VLLL…SPLL). Topologically, residues 312 to 348 (RLCVWVLGKVSGKAEYAYILQHPGETGYKHLHVRRNS) are cytoplasmic. 2 helical membrane passes run 349–369 (VYIV…ICSF) and 402–422 (ILDI…VMYL). The Cytoplasmic segment spans residues 423–448 (PSDASFLTANADNQPLTDKKTNSISR). The next 2 membrane-spanning stretches (helical) occupy residues 449-471 (ALWR…LACI) and 524-544 (GFVG…MFLG). Topologically, residues 545–552 (RLKEFILK) are cytoplasmic.

The protein belongs to the TrkH potassium transport family. HKT (TC 2.A.38.3) subfamily. As to expression, expressed in shoots. In roots, expressed in epidermis, exodermis, cortex, and sieve elements and companion cells of phloem. In mature leaves, expressed in large highly vacuolated cells of the adaxial epidermis, phloem and xylem.

The protein resides in the membrane. It catalyses the reaction Na(+)(in) = Na(+)(out). Functionally, functions as a low-affinity sodium transporter. The polypeptide is Cation transporter HKT1;1 (Oryza sativa subsp. japonica (Rice)).